Here is a 301-residue protein sequence, read N- to C-terminus: Homoserine O-acetyltransferase (301 aa).

Residue Cys142 is the Acyl-thioester intermediate of the active site. Substrate is bound by residues Lys163 and Ser192. His235 functions as the Proton acceptor in the catalytic mechanism. Glu237 is a catalytic residue. Position 249 (Arg249) interacts with substrate.

This sequence belongs to the MetA family.

It is found in the cytoplasm. It carries out the reaction L-homoserine + acetyl-CoA = O-acetyl-L-homoserine + CoA. The protein operates within amino-acid biosynthesis; L-methionine biosynthesis via de novo pathway; O-acetyl-L-homoserine from L-homoserine: step 1/1. In terms of biological role, transfers an acetyl group from acetyl-CoA to L-homoserine, forming acetyl-L-homoserine. The polypeptide is Homoserine O-acetyltransferase (Bacillus cereus (strain ZK / E33L)).